An 85-amino-acid polypeptide reads, in one-letter code: MKVAVVVALLCFVCYTAAETCSADGDCKNTICDASHDLECHRGQCTCVNHATACSSAADCSGSCTIFGRHGRWHCVDAKCRCFFV.

Positions 1-18 (MKVAVVVALLCFVCYTAA) are cleaved as a signal peptide.

Post-translationally, contains 6 disulfide bonds. As to expression, detected in hemolymph (at protein level). Within the digestive gland expression is limited to the basophil cells of the digestive diverticula.

The protein localises to the secreted. In terms of biological role, slow-binding inhibitor of serine proteases. The inhibitor rapidly binds to the protease forming a weak enzyme-inhibitor complex, and this is followed by a slow isomerization forming a tight-binding enzyme-inhibitor complex. Active against subtilisin A with a dissociation constant of 0.18 nM. Active against perkinsin. Not active against thermolysin, papain or pepsin. The chain is Serine protease inhibitor Cvsi-2 from Crassostrea virginica (Eastern oyster).